Reading from the N-terminus, the 496-residue chain is Adenosine transporter 1 (496 aa).

The Cytoplasmic segment spans residues 1–26 (MSSHTSTPNHASAAPPRKWYDMTSAE). A helical transmembrane segment spans residues 27 to 47 (FYVYVVAFMCGISMLMPINAV). Over 48–77 (FSAPSYMLQYYLYATKDPNHVPQMTNFWSN) the chain is Extracellular. The helical transmembrane segment at 78 to 98 (VMTYYNLIGLVTGLVMEPLTL) threads the bilayer. At 99 to 107 (LKSFRKIPM) the chain is on the cytoplasmic side. The helical transmembrane segment at 108–128 (LVRLLGGLCILIVEIIVLMAV) threads the bilayer. The Extracellular segment spans residues 129–135 (PARGTTE). The helical transmembrane segment at 136-156 (GGAVATMCIAGFIGGLGKSIF) threads the bilayer. The Cytoplasmic segment spans residues 157–172 (ESTVYGMFGAFPPSFT). Residues 173–193 (SIMMGGVGISGVLTSLIQIIV) form a helical membrane-spanning segment. The Extracellular portion of the chain corresponds to 194-208 (KAALPDTYEGVKKQS). A helical transmembrane segment spans residues 209-229 (YIYYSLDVGIQAATFIALIMM). Residues 230 to 336 (RFNSFAQLHF…SIISVLRSIK (107 aa)) lie on the Cytoplasmic side of the membrane. A helical transmembrane segment spans residues 337-357 (WMFVSCAFVFVVTLFLFPGIA). At 358–365 (TGMFPESK) the chain is on the extracellular side. A helical transmembrane segment spans residues 366–386 (WFATVAVFIFNCCDVLGRVAP). Topologically, residues 387–399 (ALRFMWPRSYNQR) are cytoplasmic. The chain crosses the membrane as a helical span at residues 400–420 (WIIVAASFARVIFVPLLLLYS). Topologically, residues 421–431 (YHYIPSEAYGY) are extracellular. Residues 432–452 (VIMVIFGFSSGYVASMSLTLG) form a helical membrane-spanning segment. The Cytoplasmic segment spans residues 453–464 (PQSKGIDNDGKR). Residues 465–485 (FVAGTLMGISILVGGTIGTVL) traverse the membrane as a helical segment. The Extracellular portion of the chain corresponds to 486–496 (SIMTQTIREKY).

It belongs to the SLC29A/ENT transporter (TC 2.A.57) family.

It is found in the membrane. The catalysed reaction is adenosine(in) = adenosine(out). Functionally, adenosine transporter. The sequence is that of Adenosine transporter 1 from Crithidia fasciculata.